Here is a 294-residue protein sequence, read N- to C-terminus: UDP-3-O-acyl-N-acetylglucosamine deacetylase (294 aa).

3 residues coordinate Zn(2+): His-75, His-232, and Asp-236. Catalysis depends on His-259, which acts as the Proton donor.

Belongs to the LpxC family. Requires Zn(2+) as cofactor.

It catalyses the reaction a UDP-3-O-[(3R)-3-hydroxyacyl]-N-acetyl-alpha-D-glucosamine + H2O = a UDP-3-O-[(3R)-3-hydroxyacyl]-alpha-D-glucosamine + acetate. Its pathway is glycolipid biosynthesis; lipid IV(A) biosynthesis; lipid IV(A) from (3R)-3-hydroxytetradecanoyl-[acyl-carrier-protein] and UDP-N-acetyl-alpha-D-glucosamine: step 2/6. In terms of biological role, catalyzes the hydrolysis of UDP-3-O-myristoyl-N-acetylglucosamine to form UDP-3-O-myristoylglucosamine and acetate, the committed step in lipid A biosynthesis. The chain is UDP-3-O-acyl-N-acetylglucosamine deacetylase from Campylobacter fetus subsp. fetus (strain 82-40).